Here is a 192-residue protein sequence, read N- to C-terminus: Protein SHORT HYPOCOTYL IN WHITE LIGHT 1 (192 aa).

The short motif at 43–50 (FRRLNRSL) is the Nuclear localization signal element. Residues 70 to 92 (GGDNYDVVPDDDGFSDDDDEEDE) are disordered. A compositionally biased stretch (acidic residues) spans 77-92 (VPDDDGFSDDDDEEDE). 2 helical membrane-spanning segments follow: residues 122–142 (ILPA…ILLL) and 159–179 (GGTV…ASFF).

In terms of assembly, interacts with HY5 and COP1 in the nucleus. In terms of tissue distribution, expressed in young seedlings (e.g. hypocotyl and cotyledons) and in green tissues (e.g. leaves, stems, sepals, and young siliques).

The protein resides in the nucleus membrane. Its function is as follows. Negative regulator of photomorphogenesis modulating both light and abscisic acid (ABA) signaling pathways. Negatively regulates the light-mediated inhibition of hypocotyl elongation, probably in a PHYB-mediated signaling pathway, but promotes flowering time (especially in long days) and lateral root formation. Enhances light-regulated gene expression. Promotes COP1-mediated degradation of HY5 during seedling development (e.g. hypocotyl growth) through enhanced ubiquitination in the darkness. Also involved in root gravitropism. This is Protein SHORT HYPOCOTYL IN WHITE LIGHT 1 from Arabidopsis thaliana (Mouse-ear cress).